Here is a 123-residue protein sequence, read N- to C-terminus: PTS-dependent dihydroxyacetone kinase, phosphotransferase subunit DhaM (123 aa).

In terms of domain architecture, PTS EIIA type-4 spans 2 to 123 (TYGIVIVSHS…EQLEKMLIEK (122 aa)). His-10 serves as the catalytic Tele-phosphohistidine intermediate; for EIIA activity.

In terms of assembly, homodimer. The dihydroxyacetone kinase complex is composed of a homodimer of DhaM, a homodimer of DhaK and the subunit DhaL.

The catalysed reaction is dihydroxyacetone + phosphoenolpyruvate = dihydroxyacetone phosphate + pyruvate. The protein operates within polyol metabolism; glycerol degradation. Component of the dihydroxyacetone kinase complex, which is responsible for the phosphoenolpyruvate (PEP)-dependent phosphorylation of dihydroxyacetone. DhaM serves as the phosphoryl donor. Is phosphorylated by phosphoenolpyruvate in an EI- and HPr-dependent reaction, and a phosphorelay system on histidine residues finally leads to phosphoryl transfer to DhaL and dihydroxyacetone. The sequence is that of PTS-dependent dihydroxyacetone kinase, phosphotransferase subunit DhaM from Lactococcus lactis subsp. lactis (strain IL1403) (Streptococcus lactis).